Here is a 131-residue protein sequence, read N- to C-terminus: Small ribosomal subunit protein uS8 (131 aa).

It belongs to the universal ribosomal protein uS8 family. Part of the 30S ribosomal subunit. Contacts proteins S5 and S12.

Its function is as follows. One of the primary rRNA binding proteins, it binds directly to 16S rRNA central domain where it helps coordinate assembly of the platform of the 30S subunit. This chain is Small ribosomal subunit protein uS8, found in Ruthia magnifica subsp. Calyptogena magnifica.